The following is a 321-amino-acid chain: Phospho-N-acetylmuramoyl-pentapeptide-transferase (321 aa).

A run of 10 helical transmembrane segments spans residues 1–21 (MIYVLAIIAFLITLILVPILI), 49–69 (TMGGLTFLISIIITTIIAIIF), 77–97 (ILLLFVTVGFGLIGFVDDYII), 112–132 (FLAQIAIAVIFFILSDVFNMI), 140–160 (IPFTNVSIPLSVVYVVFIVFW), 176–196 (GLATGLSIIAFAMYAIMSFML), 200–220 (AVGTFCIIMVFALLGFLIYNV), 225–245 (VFMGDTGSLALGGIIATVSIM), 250–270 (ISLIFIGFVFVAETLSVILQV), and 300–320 (VVSVFWIVGLITGLIGLWIGV).

Belongs to the glycosyltransferase 4 family. MraY subfamily. Requires Mg(2+) as cofactor.

The protein localises to the cell membrane. It catalyses the reaction UDP-N-acetyl-alpha-D-muramoyl-L-alanyl-gamma-D-glutamyl-L-lysyl-D-alanyl-D-alanine + di-trans,octa-cis-undecaprenyl phosphate = Mur2Ac(oyl-L-Ala-gamma-D-Glu-L-Lys-D-Ala-D-Ala)-di-trans,octa-cis-undecaprenyl diphosphate + UMP. The protein operates within cell wall biogenesis; peptidoglycan biosynthesis. Its function is as follows. Catalyzes the initial step of the lipid cycle reactions in the biosynthesis of the cell wall peptidoglycan: transfers peptidoglycan precursor phospho-MurNAc-pentapeptide from UDP-MurNAc-pentapeptide onto the lipid carrier undecaprenyl phosphate, yielding undecaprenyl-pyrophosphoryl-MurNAc-pentapeptide, known as lipid I. The polypeptide is Phospho-N-acetylmuramoyl-pentapeptide-transferase (Staphylococcus carnosus (strain TM300)).